A 1760-amino-acid chain; its full sequence is Chitin synthase csmB (1760 aa).

A compositionally biased stretch (low complexity) spans 1–17 (MSNRFSVYSSHSTGVSS). Residues 1-23 (MSNRFSVYSSHSTGVSSARPSAP) form a disordered region. The 374-residue stretch at 1-374 (MSNRFSVYSS…TVSITVVDIP (374 aa)) folds into the Myosin motor domain. N-linked (GlcNAc...) asparagine glycosylation occurs at Asn-275. Residues 344–363 (LDNDPSTSGGSGPGGQWTDD) are disordered. A region of interest (actin-binding) is located at residue Pro-374. 2 helical membrane passes run 731–751 (IWVG…LRWI) and 767–787 (LVLM…IIAF). Residues Asn-878, Asn-906, and Asn-995 are each glycosylated (N-linked (GlcNAc...) asparagine). Residues 1029–1049 (ILLSFTVLICAVILVKFVSAL) traverse the membrane as a helical segment. N-linked (GlcNAc...) asparagine glycosylation is present at Asn-1394. 3 helical membrane-spanning segments follow: residues 1419-1439 (FVVL…VYLG), 1452-1472 (FPMI…IIFL), and 1480-1500 (IGWM…LPLY). Asn-1584 and Asn-1652 each carry an N-linked (GlcNAc...) asparagine glycan. One can recognise a DEK-C domain in the interval 1702–1758 (GPDEGAITEAIRACLAEVDLDTVTKKQVRALVEQRLQTTLMGDKRTFLDRQIDHELA).

The protein in the N-terminal section; belongs to the TRAFAC class myosin-kinesin ATPase superfamily. Myosin family. This sequence in the C-terminal section; belongs to the chitin synthase family. Class V subfamily.

The protein resides in the cell membrane. The protein localises to the cell septum. It is found in the cell tip. The enzyme catalyses [(1-&gt;4)-N-acetyl-beta-D-glucosaminyl](n) + UDP-N-acetyl-alpha-D-glucosamine = [(1-&gt;4)-N-acetyl-beta-D-glucosaminyl](n+1) + UDP + H(+). Its function is as follows. Polymerizes chitin, a structural polymer of the cell wall and septum, by transferring the sugar moiety of UDP-GlcNAc to the non-reducing end of the growing chitin polymer. Plays an important role in septal growth or maintenance. Mediates colony spore formation. The protein is Chitin synthase csmB of Aspergillus niger (strain ATCC MYA-4892 / CBS 513.88 / FGSC A1513).